The following is a 736-amino-acid chain: Subtilisin-like protease SBT4.6 (736 aa).

A signal peptide spans 1–24 (MATAVSYCLLSCIFALLVVSFASA). A propeptide spans 25–111 (GKDDQDKQVY…VFPSKNLNLQ (87 aa)) (activation peptide). An Inhibitor I9 domain is found at 33-110 (VYIVYMGALP…SVFPSKNLNL (78 aa)). Residues 115–589 (SWNFMGLKEG…AGHVDPIAAI (475 aa)) form the Peptidase S8 domain. The active-site Charge relay system is the Asp143. An N-linked (GlcNAc...) asparagine glycan is attached at Asn174. His204 functions as the Charge relay system in the catalytic mechanism. N-linked (GlcNAc...) asparagine glycosylation occurs at Asn227. The PA domain maps to 362-442 (KYPLVYGKSA…PVSVLSEDDY (81 aa)). A glycan (N-linked (GlcNAc...) asparagine) is linked at Asn450. Ser527 (charge relay system) is an active-site residue. N-linked (GlcNAc...) asparagine glycosylation is found at Asn564, Asn598, Asn610, and Asn668.

The protein belongs to the peptidase S8 family. In terms of processing, the C-terminal propeptide is autocleaved.

It localises to the secreted. The protein is Subtilisin-like protease SBT4.6 of Arabidopsis thaliana (Mouse-ear cress).